Consider the following 170-residue polypeptide: Protein FAM209 (170 aa).

Residues 1–20 (MRTLLRWCLFLSLCVSCACA) form the signal peptide. Residues 56–76 (WLGNKWLWLFVAIMIYVMLKF) traverse the membrane as a helical segment. Residues 83–107 (KEQHPPGLRGCQLRSPPKKAQNISP) are disordered.

Interacts with DPY19L2. Interacts with CYLC1; the interaction may be relevant for proper acrosome attachment to the nuclear envelope. Predominately expressed in testis.

The protein localises to the nucleus inner membrane. Its function is as follows. Required for sperm acrosome biogenesis. The sequence is that of Protein FAM209 from Mus musculus (Mouse).